Reading from the N-terminus, the 371-residue chain is Cytochrome b (371 aa).

The next 8 membrane-spanning stretches (helical) occupy residues 25 to 45 (FGSMLLACSSMQVLTGFFLAV), 69 to 90 (WMMQNLHAIGASMFFICIYIHI), 105 to 125 (WLSGTTLLIMLMVTAFFGXXX), 170 to 190 (XXXXXXXXXXXXXXXXXXXXX), 218 to 238 (YKDLLMLSLMVLMLLMTVSFL), 280 to 300 (LGGALALAMSIMILLTVPFTH), 312 to 332 (IMQLMFWTLVATFMVITWAAT), and 339 to 358 (FTMISQIASTIYFLFFIMNP). 2 residues coordinate heme b: H75 and H89. Positions 174 and 188 each coordinate heme b.

It belongs to the cytochrome b family. As to quaternary structure, the cytochrome bc1 complex contains 3 respiratory subunits (MT-CYB, CYC1 and UQCRFS1), 2 core proteins (UQCRC1 and UQCRC2) and probably 6 low-molecular weight proteins. Requires heme b as cofactor.

Its subcellular location is the mitochondrion inner membrane. Functionally, component of the ubiquinol-cytochrome c reductase complex (complex III or cytochrome b-c1 complex) that is part of the mitochondrial respiratory chain. The b-c1 complex mediates electron transfer from ubiquinol to cytochrome c. Contributes to the generation of a proton gradient across the mitochondrial membrane that is then used for ATP synthesis. The polypeptide is Cytochrome b (MT-CYB) (Eryx tataricus (Tartar sand boa)).